A 419-amino-acid chain; its full sequence is 2-amino-3-ketobutyrate coenzyme A ligase, mitochondrial (419 aa).

Residues 1 to 21 (MWPGNAWRAALFWVPRGRRAQ) constitute a mitochondrion transit peptide. Residue lysine 45 is modified to N6-acetyllysine; alternate. N6-succinyllysine; alternate is present on lysine 45. 134–135 (CY) contacts pyridoxal 5'-phosphate. Residue histidine 159 participates in substrate binding. Lysine 187 carries the N6-acetyllysine; alternate modification. Residue lysine 187 is modified to N6-succinyllysine; alternate. Pyridoxal 5'-phosphate is bound by residues serine 206, 262–265 (TLGK), and 295–296 (SN). Lysine 265 bears the N6-(pyridoxal phosphate)lysine mark. 2 positions are modified to N6-succinyllysine: lysine 326 and lysine 368. Lysine 383 is subject to N6-acetyllysine; alternate. An N6-succinyllysine; alternate modification is found at lysine 383. Arginine 389 lines the substrate pocket.

The protein belongs to the class-II pyridoxal-phosphate-dependent aminotransferase family. Pyridoxal 5'-phosphate serves as cofactor. Strongly expressed in heart, brain, liver and pancreas. Also found in lung.

It is found in the mitochondrion. Its subcellular location is the nucleus. It catalyses the reaction glycine + acetyl-CoA = (2S)-2-amino-3-oxobutanoate + CoA. Its function is as follows. Pyridoxal phosphate (PLP) dependent enzyme, which catalyzes the cleavage of 2-amino-3-oxobutanoate to glycine and acetyl-CoA. This Homo sapiens (Human) protein is 2-amino-3-ketobutyrate coenzyme A ligase, mitochondrial.